Reading from the N-terminus, the 400-residue chain is Na(+)/H(+) antiporter NhaA (400 aa).

The next 12 helical transmembrane spans lie at 26-46 (AGGI…NSPL), 71-91 (LIHW…GMEV), 107-127 (IFPA…YWFI), 137-157 (GWAI…ALLS), 166-186 (IFLL…IALF), 189-209 (HGLS…LILL), 212-232 (FKVS…ASVL), 233-253 (KSGV…PLKG), 273-293 (FVIL…GIDV), 299-319 (PLLL…IFGF), 340-360 (IFAV…LASL), and 373-393 (LSRL…YLFL).

This sequence belongs to the NhaA Na(+)/H(+) (TC 2.A.33) antiporter family.

The protein localises to the cell inner membrane. The enzyme catalyses Na(+)(in) + 2 H(+)(out) = Na(+)(out) + 2 H(+)(in). Its function is as follows. Na(+)/H(+) antiporter that extrudes sodium in exchange for external protons. The polypeptide is Na(+)/H(+) antiporter NhaA (Haemophilus influenzae (strain PittGG)).